The sequence spans 191 residues: Calcium-activated potassium channel subunit beta-1 (191 aa).

The Cytoplasmic segment spans residues 1 to 18; sequence MGKKLVMAQKRGETRALC. A helical transmembrane segment spans residues 19-39; sequence LGVAMVVCAAITYYVLGTTVL. At 40 to 155 the chain is on the extracellular side; the sequence is PLYQKSVWTQ…VVYQRLYGPQ (116 aa). Asn-80 and Asn-142 each carry an N-linked (GlcNAc...) asparagine glycan. The helical transmembrane segment at 156-176 threads the bilayer; the sequence is VLLFSFFWPTFLLTGGLLLIA. At 177–191 the chain is on the cytoplasmic side; that stretch reads MVKLNRSLSILAAQK.

It belongs to the KCNMB (TC 8.A.14.1) family. KCNMB1 subfamily. In terms of assembly, interacts with KCNMA1 tetramer. There are probably 4 molecules of KCMNB1 per KCNMA1 tetramer. In terms of processing, N-glycosylated. As to expression, expressed in many tissues containing smooth muscles. In brain and heart, it is not expressed except in the vasculature, such as cerebral arteries, aorta and corona arteries.

It localises to the membrane. In terms of biological role, regulatory subunit of the calcium activated potassium KCNMA1 (maxiK) channel. Modulates the calcium sensitivity and gating kinetics of KCNMA1, thereby contributing to KCNMA1 channel diversity. Increases the apparent Ca(2+)/voltage sensitivity of the KCNMA1 channel. It also modifies KCNMA1 channel kinetics and alters its pharmacological properties. It slows down the activation and the deactivation kinetics of the channel. Acts as a negative regulator of smooth muscle contraction by enhancing the calcium sensitivity to KCNMA1. Its presence is also a requirement for internal binding of the KCNMA1 channel opener dehydrosoyasaponin I (DHS-1) triterpene glycoside and for external binding of the agonist hormone 17-beta-estradiol (E2). Increases the binding activity of charybdotoxin (CTX) toxin to KCNMA1 peptide blocker by increasing the CTX association rate and decreasing the dissociation rate. This Mus musculus (Mouse) protein is Calcium-activated potassium channel subunit beta-1 (Kcnmb1).